We begin with the raw amino-acid sequence, 108 residues long: Cytochrome c (108 aa).

Heme c-binding residues include Cys-19, Cys-22, His-23, and Met-85.

It belongs to the cytochrome c family. Binds 1 heme c group covalently per subunit.

It localises to the mitochondrion intermembrane space. Electron carrier protein. The oxidized form of the cytochrome c heme group can accept an electron from the heme group of the cytochrome c1 subunit of cytochrome reductase. Cytochrome c then transfers this electron to the cytochrome oxidase complex, the final protein carrier in the mitochondrial electron-transport chain. This is Cytochrome c from Stellaria longipes (Longstalk starwort).